A 191-amino-acid chain; its full sequence is Fe/S biogenesis protein NfuA (191 aa).

The [4Fe-4S] cluster site is built by C149 and C152.

It belongs to the NfuA family. As to quaternary structure, homodimer. It depends on [4Fe-4S] cluster as a cofactor.

Its function is as follows. Involved in iron-sulfur cluster biogenesis. Binds a 4Fe-4S cluster, can transfer this cluster to apoproteins, and thereby intervenes in the maturation of Fe/S proteins. Could also act as a scaffold/chaperone for damaged Fe/S proteins. The chain is Fe/S biogenesis protein NfuA from Serratia proteamaculans (strain 568).